The primary structure comprises 738 residues: Conserved oligomeric Golgi complex subunit 4 (738 aa).

This sequence belongs to the COG4 family. Component of the conserved oligomeric Golgi complex which is composed of eight different subunits and is required for normal Golgi morphology and localization. Interacts with COG2 and COG3.

The protein localises to the golgi apparatus membrane. Its function is as follows. Required for normal Golgi function. The chain is Conserved oligomeric Golgi complex subunit 4 from Arabidopsis thaliana (Mouse-ear cress).